We begin with the raw amino-acid sequence, 77 residues long: Translation initiation factor IF-1, chloroplastic (77 aa).

The S1-like domain maps to 1 to 71; it reads MKEQKLIHEG…TRGRIIYRLR (71 aa).

This sequence belongs to the IF-1 family. As to quaternary structure, component of the 30S ribosomal translation pre-initiation complex which assembles on the 30S ribosome in the order IF-2 and IF-3, IF-1 and N-formylmethionyl-tRNA(fMet); mRNA recruitment can occur at any time during PIC assembly.

Its subcellular location is the plastid. It is found in the chloroplast. Functionally, one of the essential components for the initiation of protein synthesis. Stabilizes the binding of IF-2 and IF-3 on the 30S subunit to which N-formylmethionyl-tRNA(fMet) subsequently binds. Helps modulate mRNA selection, yielding the 30S pre-initiation complex (PIC). Upon addition of the 50S ribosomal subunit IF-1, IF-2 and IF-3 are released leaving the mature 70S translation initiation complex. This chain is Translation initiation factor IF-1, chloroplastic, found in Calycanthus floridus var. glaucus (Eastern sweetshrub).